A 354-amino-acid polypeptide reads, in one-letter code: DNA polymerase IV (354 aa).

The UmuC domain occupies 8–189 (IIHIDMDCFY…LPLQKIPGVG (182 aa)). Residues Asp-12 and Asp-107 each contribute to the Mg(2+) site. The active site involves Glu-108.

It belongs to the DNA polymerase type-Y family. Monomer. Mg(2+) is required as a cofactor.

It localises to the cytoplasm. It catalyses the reaction DNA(n) + a 2'-deoxyribonucleoside 5'-triphosphate = DNA(n+1) + diphosphate. Poorly processive, error-prone DNA polymerase involved in untargeted mutagenesis. Copies undamaged DNA at stalled replication forks, which arise in vivo from mismatched or misaligned primer ends. These misaligned primers can be extended by PolIV. Exhibits no 3'-5' exonuclease (proofreading) activity. May be involved in translesional synthesis, in conjunction with the beta clamp from PolIII. This is DNA polymerase IV from Vibrio vulnificus (strain CMCP6).